We begin with the raw amino-acid sequence, 260 residues long: 3'-5' ssDNA/RNA exonuclease TatD (260 aa).

The a divalent metal cation site is built by glutamate 92, histidine 128, and histidine 153.

It belongs to the metallo-dependent hydrolases superfamily. TatD-type hydrolase family. TatD subfamily. In terms of assembly, monomer. Requires Mg(2+) as cofactor.

The protein resides in the cytoplasm. In terms of biological role, 3'-5' exonuclease that prefers single-stranded DNA and RNA. May play a role in the H(2)O(2)-induced DNA damage repair. This chain is 3'-5' ssDNA/RNA exonuclease TatD, found in Pantoea vagans (strain C9-1) (Pantoea agglomerans (strain C9-1)).